Consider the following 477-residue polypeptide: Argininosuccinate synthase (477 aa).

Residues 17-25 (AFSGGLDTS) and A43 each bind ATP. Y99 contacts L-citrulline. Residues G129 and T131 each coordinate ATP. The L-aspartate site is built by T131, N135, and D136. Position 135 (N135) interacts with L-citrulline. Position 136 (D136) interacts with ATP. The L-citrulline site is built by R139 and S192. D194 is a binding site for ATP. The L-citrulline site is built by T201, E203, and E280. Positions 450 to 477 (DQITENPEVQAEPEEEALDAAAMEAGTD) are disordered. Residues 468–477 (DAAAMEAGTD) show a composition bias toward low complexity.

Belongs to the argininosuccinate synthase family. Type 2 subfamily. As to quaternary structure, homotetramer.

The protein resides in the cytoplasm. It catalyses the reaction L-citrulline + L-aspartate + ATP = 2-(N(omega)-L-arginino)succinate + AMP + diphosphate + H(+). Its pathway is amino-acid biosynthesis; L-arginine biosynthesis; L-arginine from L-ornithine and carbamoyl phosphate: step 2/3. In Nocardioides sp. (strain ATCC BAA-499 / JS614), this protein is Argininosuccinate synthase.